We begin with the raw amino-acid sequence, 329 residues long: 2-oxoglutarate-dependent dioxygenase mpl2 (329 aa).

One can recognise a Fe2OG dioxygenase domain in the interval 183-288; it reads PACPLRLLHY…RYSVVFFFDG (106 aa). Residues His211, Asp213, and His269 each coordinate Fe cation. Residue Arg279 coordinates 2-oxoglutarate.

This sequence belongs to the iron/ascorbate-dependent oxidoreductase family. Fe(2+) serves as cofactor.

The protein operates within mycotoxin biosynthesis. 2-oxoglutarate-dependent dioxygenase; part of the gene cluster that mediates the biosynthesis of the mycotoxin citrinin, a hepato-nephrotoxic compound to humans due to inhibition of respiration complex III. The pathway begins with the synthesis of a keto-aldehyde intermediate by the citrinin PKS (pksCT) from successive condensations of 4 malonyl-CoA units, presumably with a simple acetyl-CoA starter unit. Release of the keto-aldehyde intermediate is consistent with the presence of the C-terminal reductive release domain. Mp11 collaborates with pksCT by catalyzing the hydrolysis of ACP-bound acyl intermediates to free the ACP from stalled intermediates. Mpl2 then catalyzes the oxidation of the C-12 methyl of the ketone intermediate to an alcohol intermediate which is further oxidized by the oxidoreductase mpl7 to produce a bisaldehyde intermediate. The fourth catalytic step is catalyzed by the mpl4 aldehyde dehydrogenase. The final transformation is the reduction of C-3 by mpl6 to provide the chemically stable citrinin nucleus. This Monascus purpureus (Red mold) protein is 2-oxoglutarate-dependent dioxygenase mpl2.